A 346-amino-acid chain; its full sequence is Methionine import ATP-binding protein MetN (346 aa).

An ABC transporter domain is found at 2–243 (VRFEGISKTY…PKHPITQSFL (242 aa)). 40–47 (GRSGAGKS) is an ATP binding site.

This sequence belongs to the ABC transporter superfamily. Methionine importer (TC 3.A.1.24) family. As to quaternary structure, the complex is composed of two ATP-binding proteins (MetN), two transmembrane proteins (MetI) and a solute-binding protein (MetQ).

The protein resides in the cell inner membrane. It catalyses the reaction L-methionine(out) + ATP + H2O = L-methionine(in) + ADP + phosphate + H(+). The catalysed reaction is D-methionine(out) + ATP + H2O = D-methionine(in) + ADP + phosphate + H(+). Functionally, part of the ABC transporter complex MetNIQ involved in methionine import. Responsible for energy coupling to the transport system. The protein is Methionine import ATP-binding protein MetN of Bradyrhizobium diazoefficiens (strain JCM 10833 / BCRC 13528 / IAM 13628 / NBRC 14792 / USDA 110).